We begin with the raw amino-acid sequence, 615 residues long: Dolichyl-diphosphooligosaccharide--protein glycosyltransferase subunit 1A (615 aa).

The first 28 residues, 1–28, serve as a signal peptide directing secretion; it reads MATPPPLRRVAALLLLLVAAASTPTARA. Residues 29–437 lie on the Lumenal side of the membrane; that stretch reads DLVVTRADRK…RFNNISLLRE (409 aa). The residue at position 187 (Lys-187) is an N6-acetyllysine. Residues Asn-300, Asn-353, and Asn-431 are each glycosylated (N-linked (GlcNAc...) asparagine). The helical transmembrane segment at 438–455 threads the bilayer; it reads PMMLITGFFLLFMACIVY. Residues 456–615 are Cytoplasmic-facing; that stretch reads MRTDMSISKN…ESLLEYISEI (160 aa).

Belongs to the OST1 family. Component of the oligosaccharyltransferase (OST) complex.

It localises to the endoplasmic reticulum membrane. It functions in the pathway protein modification; protein glycosylation. Subunit of the oligosaccharyl transferase (OST) complex that catalyzes the initial transfer of a defined glycan (Glc(3)Man(9)GlcNAc(2) in eukaryotes) from the lipid carrier dolichol-pyrophosphate to an asparagine residue within an Asn-X-Ser/Thr consensus motif in nascent polypeptide chains, the first step in protein N-glycosylation. N-glycosylation occurs cotranslationally and the complex associates with the Sec61 complex at the channel-forming translocon complex that mediates protein translocation across the endoplasmic reticulum (ER). All subunits are required for a maximal enzyme activity. This is Dolichyl-diphosphooligosaccharide--protein glycosyltransferase subunit 1A (OST1A) from Oryza sativa subsp. japonica (Rice).